The following is a 422-amino-acid chain: FAD-dependent monooxygenase ptmM (422 aa).

The helical transmembrane segment at 8–24 (VIIVGGSIAGLTLAHCL) threads the bilayer. FAD contacts are provided by E35, G49, R108, D308, and A321.

It belongs to the paxM FAD-dependent monooxygenase family. Requires FAD as cofactor.

The protein localises to the membrane. It participates in secondary metabolite biosynthesis. In terms of biological role, FAD-dependent monooxygenase; part of the gene cluster that mediates the biosynthesis of the indole diterpenes penitrems. The geranylgeranyl diphosphate (GGPP) synthase ptmG catalyzes the first step in penitrem biosynthesis via conversion of farnesyl pyrophosphate and isopentyl pyrophosphate into geranylgeranyl pyrophosphate (GGPP). Condensation of indole-3-glycerol phosphate with GGPP by the prenyl transferase ptmC then forms 3-geranylgeranylindole (3-GGI). Epoxidation by the FAD-dependent monooxygenase ptmM leads to a epoxidized-GGI that is substrate of the terpene cyclase ptmB for cyclization to yield paspaline. Paspaline is subsequently converted to 13-desoxypaxilline by the cytochrome P450 monooxygenase ptmP, the latter being then converted to paxilline by the cytochrome P450 monooxygenase ptmQ. Paxilline is converted to beta-paxitriol via C-10 ketoreduction by the short-chain dehydrogenase ptmH which can be monoprenylated at the C-20 by the indole diterpene prenyltransferase ptmD. A two-step elimination (acetylation and elimination) process performed by the O-acetyltransferase ptmV and ptmI leads to the production of the prenylated form of penijanthine. The FAD-linked oxidoreductase ptmO then converts the prenylated form of penijanthine into PC-M5 which is in turn transformed into PC-M4 by the aromatic dimethylallyltransferase ptmE. Five sequential oxidative transformations performed by the cytochrome P450 monooxygenases ptmK, ptmU, ptmL, ptmN and ptmJ yield the various penitrem compounds. PtmK, ptmU and ptmM are involved in the formation of the key bicyclic ring of penitrem C via the formation of the intermediates secopenitrem D and penitrem D. PtmL catalyzes the epoxidation of penitrem D and C to yield penitrem B and F, respectively. PtmJ catalyzes the last benzylic hydroxylation to convert penitrem B to prenitrem E and penitrem F to penitrem A. The chain is FAD-dependent monooxygenase ptmM from Penicillium ochrochloron.